A 656-amino-acid chain; its full sequence is Heparan-alpha-glucosaminide N-acetyltransferase (656 aa).

The tract at residues 1 to 31 (MTGGSSSRRRRAEERSSAAGTERNSRREAVG) is disordered. Topologically, residues 1–185 (MTGGSSSRRR…IIVNENPVDS (185 aa)) are lumenal, vesicle. Residues Asn137 and Asn157 are each glycosylated (N-linked (GlcNAc...) asparagine). A disulfide bridge links Cys146 with Cys455. Residues 186–206 (NLPVSIAFLVGLALIVAVSLL) traverse the membrane as a helical segment. Residues 207–268 (RLLLSLDDVN…NRLRCVDTFR (62 aa)) lie on the Cytoplasmic side of the membrane. The tract at residues 234-253 (SELGSPSRADPLSADYQPET) is disordered. Residues Ser238 and Ser240 each carry the phosphoserine modification. Tyr249 carries the phosphotyrosine modification. A helical membrane pass occupies residues 269 to 289 (GLALVLMVFVNYGGGKYWYFK). His290 is a catalytic residue. Topologically, residues 290–295 (HSSWNG) are lumenal, vesicle. Residues 296–316 (LTVADLVFPWFVFIMGTSIFL) form a helical membrane-spanning segment. Residues 317–338 (SMTSILQRGCSKLKLLGKIVWR) lie on the Cytoplasmic side of the membrane. A helical membrane pass occupies residues 339–359 (SFLLICIGVIIVNPNYCLGPL). Topologically, residues 360–367 (SWDKVRIP) are lumenal, vesicle. Residues 368–388 (GVLQRLGVTYFVVAVLEFFFW) form a helical membrane-spanning segment. At 389 to 413 (KPVPDSCTLESSCFSLRDITSSWPQ) the chain is on the cytoplasmic side. A helical membrane pass occupies residues 414–434 (WLTILTLESIWLALTFFLPVP). Topologically, residues 435-493 (GCPTGYLGPGGIGDLGKYPHCTGGAAGYIDRLLLGDNHLYQHPSSTVLYHTEVAYDPEG) are lumenal, vesicle. A helical membrane pass occupies residues 494-514 (VLGTINSIVMAFLGVQAGKIL). Residues 515-522 (VYYKDQTK) are Cytoplasmic-facing. The helical transmembrane segment at 523–543 (AILTRFAAWCCILGLISIVLT) threads the bilayer. Residues 544–557 (KVSANEGFIPINKN) lie on the Lumenal, vesicle side of the membrane. The helical transmembrane segment at 558–578 (LWSISYVTTLSCFAFFILLIL) threads the bilayer. Topologically, residues 579–585 (YPVVDVK) are cytoplasmic. Residues 586–606 (GLWTGTPFFYPGMNSILVYVG) traverse the membrane as a helical segment. Residues 607-627 (HEVLENYFPFQWKLADEQSHK) are Lumenal, vesicle-facing. Residues 628 to 648 (EHLIQNIVATALWVLIAYVLY) traverse the membrane as a helical segment. The tract at residues 641-656 (VLIAYVLYKKKLFWKI) is lysosomal targeting region. Topologically, residues 649–656 (KKKLFWKI) are cytoplasmic.

In terms of assembly, homooligomer. Homooligomerization is necessary for enzyme activity. Post-translationally, undergoes intralysosomal proteolytic cleavage; occurs within the end of the first and/or the beginning of the second luminal domain and is essential for the activation of the enzyme. In terms of processing, glycosylated. Expressed in the retina.

The protein resides in the lysosome membrane. It catalyses the reaction alpha-D-glucosaminyl-[heparan sulfate](n) + acetyl-CoA = N-acetyl-alpha-D-glucosaminyl-[heparan sulfate](n) + CoA + H(+). Its function is as follows. Lysosomal acetyltransferase that acetylates the non-reducing terminal alpha-glucosamine residue of intralysosomal heparin or heparan sulfate, converting it into a substrate for luminal alpha-N-acetyl glucosaminidase. The sequence is that of Heparan-alpha-glucosaminide N-acetyltransferase (Hgsnat) from Mus musculus (Mouse).